The primary structure comprises 309 residues: Calcium homeostasis modulator protein 5 (309 aa).

Topologically, residues Met-1–Lys-15 are cytoplasmic. Residues Thr-16–Val-37 form a helical membrane-spanning segment. 2 residues coordinate a 1,2-diacyl-sn-glycero-3-phosphate: Arg-32 and Val-37. The Extracellular portion of the chain corresponds to Ala-38–Ile-45. 3 disulfides stabilise this stretch: Cys-41/Cys-127, Cys-43/Cys-158, and Cys-142/Cys-149. Residues Glu-46 to Asn-70 traverse the membrane as a helical segment. The Cytoplasmic segment spans residues Asn-71–Val-99. A helical membrane pass occupies residues Leu-100–Met-129. Asn-121 lines the a 1,2-diacyl-sn-glycero-3-phosphate pocket. The Extracellular segment spans residues Ser-130–Ser-174. The helical transmembrane segment at Leu-175–Tyr-200 threads the bilayer. Residues Ala-201–Leu-309 lie on the Cytoplasmic side of the membrane. Residue Arg-202 coordinates a 1,2-diacyl-sn-glycero-3-phosphate.

It belongs to the CALHM family. In terms of assembly, oligomerizes to form undecameric cone-shaped channels.

It is found in the membrane. In terms of biological role, may assemble to form large pore channels with gating and ion conductance likely regulated by membrane lipids. The protein is Calcium homeostasis modulator protein 5 of Rattus norvegicus (Rat).